Reading from the N-terminus, the 265-residue chain is Serine protease 1 (265 aa).

The N-terminal stretch at 1 to 21 (MKLFVFLALAVAAATAVPAPA) is a signal peptide. Positions 22 to 35 (QKLTPTPIKDIQGR) are excised as a propeptide. In terms of domain architecture, Peptidase S1 spans 36-262 (ITNGYPAYEG…YLDWIRDNTG (227 aa)). Cys-63 and Cys-79 are joined by a disulfide. Residues His-78 and Asp-123 each act as charge relay system in the active site. Cystine bridges form between Cys-189–Cys-201 and Cys-211–Cys-239. Catalysis depends on Ser-215, which acts as the Charge relay system.

This sequence belongs to the peptidase S1 family. In terms of tissue distribution, abundantly expressed in the larval gut.

In terms of biological role, major function may be to aid in digestion. In Drosophila melanogaster (Fruit fly), this protein is Serine protease 1.